Consider the following 472-residue polypeptide: Eukaryotic translation initiation factor 2 subunit 3, X-linked (472 aa).

The residue at position 2 (Ala-2) is an N-acetylalanine. Ser-16 is subject to Phosphoserine. A tr-type G domain is found at 39–248 (QATINIGTIG…IVKKIPVPPR (210 aa)). Residues 48-55 (GHVAHGKS) are G1. 51-56 (AHGKST) serves as a coordination point for GTP. Residues 76-80 (NITIK) form a G2 region. Residues 134-137 (DCPG) are G3. GTP-binding positions include 190–193 (NKID) and 225–227 (SAQ). The segment at 190–193 (NKID) is G4. The tract at residues 225–227 (SAQ) is G5. The tract at residues 457-469 (GQIRRGVTIKPTV) is interacts with Cdc123.

This sequence belongs to the TRAFAC class translation factor GTPase superfamily. Classic translation factor GTPase family. EIF2G subfamily. As to quaternary structure, eukaryotic translation initiation factor 2 eIF2 is a heterotrimeric complex composed of an alpha (EIF2S1), a beta (EIF2S2) and a gamma (EIF2S3) chain. eIF2 is member of the 43S pre-initiation complex (43S PIC). Interacts (via C-terminus) with CDC123; the interaction is direct. As to expression, widely expressed.

The protein localises to the cytoplasm. Its subcellular location is the cytosol. It catalyses the reaction GTP + H2O = GDP + phosphate + H(+). Its function is as follows. Member of the eIF2 complex that functions in the early steps of protein synthesis by forming a ternary complex with GTP and initiator tRNA. This complex binds to a 40S ribosomal subunit, followed by mRNA binding to form the 43S pre-initiation complex (43S PIC). Junction of the 60S ribosomal subunit to form the 80S initiation complex is preceded by hydrolysis of the GTP bound to eIF2 and release of an eIF2-GDP binary complex. In order for eIF2 to recycle and catalyze another round of initiation, the GDP bound to eIF2 must exchange with GTP by way of a reaction catalyzed by eIF-2B. Along with its paralog on chromosome Y, may contribute to spermatogenesis up to the round spermatid stage. The protein is Eukaryotic translation initiation factor 2 subunit 3, X-linked (Eif2s3) of Rattus norvegicus (Rat).